Here is a 265-residue protein sequence, read N- to C-terminus: Uronate dehydrogenase (265 aa).

NAD(+)-binding positions include 12–13 (QL), 32–34 (DLS), 49–50 (DL), and 69–73 (LGGIS). Residues serine 73 and 109–111 (SNH) contribute to the substrate site. Tyrosine 134 functions as the Proton acceptor in the catalytic mechanism. Residue lysine 138 coordinates NAD(+). Serine 163 serves as a coordination point for substrate. An NAD(+)-binding site is contributed by cysteine 164. Position 172 (arginine 172) interacts with substrate.

Belongs to the NAD(P)-dependent epimerase/dehydratase family. In terms of assembly, homohexamer.

It catalyses the reaction beta-D-galacturonate + NAD(+) = D-galactaro-1,5-lactone + NADH + H(+). It carries out the reaction beta-D-glucuronate + NAD(+) = D-glucaro-1,5-lactone + NADH + H(+). It functions in the pathway carbohydrate acid metabolism; D-galacturonate degradation via prokaryotic oxidative pathway. Functionally, catalyzes the oxidation of D-galacturonate and D-glucuronate to galactarate and D-glucarate, respectively. In fact, in water solution the substrate D-galacturonate is predominantly in pyranosic form whose beta anomer is converted by the enzyme to D-galactaro-1,5-lactone; in solution, this reaction product rearranges to the more stable D-galactaro-1,4-lactone. Makes part of the oxidative degradation pathway of D-galacturonate, which allows A.tumefaciens to utilize D-galacturonate as a sole carbon source. Cannot use NADP(+) instead of NAD(+) as cosubstrate. Is not active on D-galactose, D-glucose, D-galactonate and D-gluconate. The protein is Uronate dehydrogenase (udh) of Agrobacterium fabrum (strain C58 / ATCC 33970) (Agrobacterium tumefaciens (strain C58)).